Consider the following 179-residue polypeptide: ATP synthase subunit b (179 aa).

The chain crosses the membrane as a helical span at residues 13–33; it reads IHIDELVFGLIAFAVIFALVY.

The protein belongs to the ATPase B chain family. In terms of assembly, F-type ATPases have 2 components, F(1) - the catalytic core - and F(0) - the membrane proton channel. F(1) has five subunits: alpha(3), beta(3), gamma(1), delta(1), epsilon(1). F(0) has three main subunits: a(1), b(2) and c(10-14). The alpha and beta chains form an alternating ring which encloses part of the gamma chain. F(1) is attached to F(0) by a central stalk formed by the gamma and epsilon chains, while a peripheral stalk is formed by the delta and b chains.

The protein resides in the cell membrane. In terms of biological role, f(1)F(0) ATP synthase produces ATP from ADP in the presence of a proton or sodium gradient. F-type ATPases consist of two structural domains, F(1) containing the extramembraneous catalytic core and F(0) containing the membrane proton channel, linked together by a central stalk and a peripheral stalk. During catalysis, ATP synthesis in the catalytic domain of F(1) is coupled via a rotary mechanism of the central stalk subunits to proton translocation. Functionally, component of the F(0) channel, it forms part of the peripheral stalk, linking F(1) to F(0). This Thermobifida fusca (strain YX) protein is ATP synthase subunit b.